The primary structure comprises 663 residues: Putative ankyrin repeat protein R219 (663 aa).

ANK repeat units lie at residues 91–118 (FRIK…GYKV), 119–148 (DFDS…KLSS), 200–229 (ANQQ…KDGT), 258–288 (DWHV…KINP), and 322–351 (YFSH…GITV).

The chain is Putative ankyrin repeat protein R219 from Acanthamoeba polyphaga mimivirus (APMV).